The primary structure comprises 438 residues: ATP-dependent protease ATPase subunit HslU (438 aa).

ATP-binding positions include Val-18, 60-65 (GVGKTE), Asp-252, Glu-317, and Arg-389.

The protein belongs to the ClpX chaperone family. HslU subfamily. A double ring-shaped homohexamer of HslV is capped on each side by a ring-shaped HslU homohexamer. The assembly of the HslU/HslV complex is dependent on binding of ATP.

It localises to the cytoplasm. ATPase subunit of a proteasome-like degradation complex; this subunit has chaperone activity. The binding of ATP and its subsequent hydrolysis by HslU are essential for unfolding of protein substrates subsequently hydrolyzed by HslV. HslU recognizes the N-terminal part of its protein substrates and unfolds these before they are guided to HslV for hydrolysis. This Saccharophagus degradans (strain 2-40 / ATCC 43961 / DSM 17024) protein is ATP-dependent protease ATPase subunit HslU.